The chain runs to 362 residues: Large ribosomal subunit protein uL3 (362 aa).

Residues 340-362 are disordered; sequence RPPKKKPPVQRPQITYVSVESKQ. Positions 351-362 are enriched in polar residues; it reads PQITYVSVESKQ.

It belongs to the universal ribosomal protein uL3 family. Part of the 50S ribosomal subunit. Forms a cluster with proteins L14 and L24e.

One of the primary rRNA binding proteins, it binds directly near the 3'-end of the 23S rRNA, where it nucleates assembly of the 50S subunit. In Pyrococcus horikoshii (strain ATCC 700860 / DSM 12428 / JCM 9974 / NBRC 100139 / OT-3), this protein is Large ribosomal subunit protein uL3.